A 448-amino-acid polypeptide reads, in one-letter code: Tubulin beta chain (448 aa).

GTP is bound by residues Q11, E69, S138, G142, T143, G144, N204, and N226. Mg(2+) is bound at residue E69. The disordered stretch occupies residues 426–448; that stretch reads QDAGIDEEEEEYEEEAPVDEPLE. Over residues 429 to 448 the composition is skewed to acidic residues; that stretch reads GIDEEEEEYEEEAPVDEPLE.

The protein belongs to the tubulin family. Dimer of alpha and beta chains. A typical microtubule is a hollow water-filled tube with an outer diameter of 25 nm and an inner diameter of 15 nM. Alpha-beta heterodimers associate head-to-tail to form protofilaments running lengthwise along the microtubule wall with the beta-tubulin subunit facing the microtubule plus end conferring a structural polarity. Microtubules usually have 13 protofilaments but different protofilament numbers can be found in some organisms and specialized cells. It depends on Mg(2+) as a cofactor.

The protein resides in the cytoplasm. It localises to the cytoskeleton. Functionally, tubulin is the major constituent of microtubules, a cylinder consisting of laterally associated linear protofilaments composed of alpha- and beta-tubulin heterodimers. Microtubules grow by the addition of GTP-tubulin dimers to the microtubule end, where a stabilizing cap forms. Below the cap, tubulin dimers are in GDP-bound state, owing to GTPase activity of alpha-tubulin. This is Tubulin beta chain (TUB2) from Epichloe coenophiala (Tall fescue endophyte fungus).